The chain runs to 339 residues: F-box protein At3g22700 (339 aa).

The F-box domain occupies 1–49; the sequence is MMSNLPLDLVEEILSRVPATSLKRLRSTCRQWNALLKDRRFTEKHFRKA.

In Arabidopsis thaliana (Mouse-ear cress), this protein is F-box protein At3g22700.